Here is an 870-residue protein sequence, read N- to C-terminus: Linoleate 9S-lipoxygenase 2 (870 aa).

The PLAT domain occupies 32 to 158; it reads NDFGATVIDG…KYRYNRVFFS (127 aa). The Lipoxygenase domain occupies 161–870; the sequence is TSLPSKMPAA…ARGIPNSISI (710 aa). The segment at 203 to 243 is disordered; sequence YNDLGEPDSGNPRPVLGGSPDRPYPRRGRTGRKPTKTDPTA. Residues 227-236 are compositionally biased toward basic residues; that stretch reads PRRGRTGRKP. Fe cation contacts are provided by His-525, His-530, His-716, Asn-720, and Ile-870.

This sequence belongs to the lipoxygenase family. As to quaternary structure, monomer. It depends on Fe cation as a cofactor.

Its subcellular location is the cytoplasm. It catalyses the reaction (9Z,12Z)-octadecadienoate + O2 = (9S)-hydroperoxy-(10E,12Z)-octadecadienoate. The protein operates within lipid metabolism; oxylipin biosynthesis. In terms of biological role, plant lipoxygenase may be involved in a number of diverse aspects of plant physiology including growth and development, pest resistance, and senescence or responses to wounding. Catalyzes the hydroperoxidation of lipids containing a cis,cis-1,4-pentadiene structure. The chain is Linoleate 9S-lipoxygenase 2 (LOX1.1) from Oryza sativa subsp. japonica (Rice).